An 88-amino-acid polypeptide reads, in one-letter code: Large ribosomal subunit protein bL27 (88 aa).

The segment at 1–21 (MAHKKGASSSRNGRDSNAKRL) is disordered.

It belongs to the bacterial ribosomal protein bL27 family.

The sequence is that of Large ribosomal subunit protein bL27 from Thermobifida fusca (strain YX).